Here is a 215-residue protein sequence, read N- to C-terminus: T-complex protein 10A homolog 1 (215 aa).

Positions 1–25 are disordered; that stretch reads MLAGQLEARDPKEGTHPEDPCPGAG. Residues 7 to 19 show a composition bias toward basic and acidic residues; that stretch reads EARDPKEGTHPED. The stretch at 69–110 forms a coiled coil; the sequence is ADVHGKLRSHIDALREQNMELREKLRALQLQRWKARKKSAAS. The leucine-zipper stretch occupies residues 75-96; sequence LRSHIDALREQNMELREKLRAL. Residues 150–163 show a composition bias toward polar residues; that stretch reads ATLLGQRSSSNNSA. Positions 150 to 215 are disordered; sequence ATLLGQRSSS…TPCAERRGGV (66 aa).

This sequence belongs to the TCP10 family. In terms of assembly, self-associates (via leucine zipper). Interacts (via leucine zipper) with ZIPK/DAPK3 (via leucine zipper). Interacts with MAD4. Expressed in liver and testis. Expressed in the seminiferous tubules (at protein level).

The protein localises to the nucleus. Functionally, may be involved in transcriptional regulation. Has in vitro transcription inhibition activity. Acts as a tumor suppressor in hepatocellular carcinoma (HCC) cells. This chain is T-complex protein 10A homolog 1 (TCP10L), found in Homo sapiens (Human).